Reading from the N-terminus, the 276-residue chain is Hydroxyethylthiazole kinase (276 aa).

M48 provides a ligand contact to substrate. ATP-binding residues include R124 and T175. G202 is a substrate binding site.

This sequence belongs to the Thz kinase family. Mg(2+) is required as a cofactor.

The enzyme catalyses 5-(2-hydroxyethyl)-4-methylthiazole + ATP = 4-methyl-5-(2-phosphooxyethyl)-thiazole + ADP + H(+). Its pathway is cofactor biosynthesis; thiamine diphosphate biosynthesis; 4-methyl-5-(2-phosphoethyl)-thiazole from 5-(2-hydroxyethyl)-4-methylthiazole: step 1/1. Catalyzes the phosphorylation of the hydroxyl group of 4-methyl-5-beta-hydroxyethylthiazole (THZ). This chain is Hydroxyethylthiazole kinase, found in Clostridium beijerinckii (strain ATCC 51743 / NCIMB 8052) (Clostridium acetobutylicum).